Here is a 443-residue protein sequence, read N- to C-terminus: Ribosomal protein uS12 methylthiotransferase RimO (443 aa).

Residues 5 to 116 form the MTTase N-terminal domain; that stretch reads PTIAINHLGC…IVDIIRRTEQ (112 aa). Positions 14, 50, 79, 154, 158, and 161 each coordinate [4Fe-4S] cluster. One can recognise a Radical SAM core domain in the interval 140–369; sequence TTNEAIAYLR…MALQQPISAQ (230 aa). The 67-residue stretch at 372–438 folds into the TRAM domain; sequence AACLGQTLDV…DYDLYGMTAE (67 aa).

It belongs to the methylthiotransferase family. RimO subfamily. The cofactor is [4Fe-4S] cluster.

It localises to the cytoplasm. It catalyses the reaction L-aspartate(89)-[ribosomal protein uS12]-hydrogen + (sulfur carrier)-SH + AH2 + 2 S-adenosyl-L-methionine = 3-methylsulfanyl-L-aspartate(89)-[ribosomal protein uS12]-hydrogen + (sulfur carrier)-H + 5'-deoxyadenosine + L-methionine + A + S-adenosyl-L-homocysteine + 2 H(+). Functionally, catalyzes the methylthiolation of an aspartic acid residue of ribosomal protein uS12. The chain is Ribosomal protein uS12 methylthiotransferase RimO from Synechocystis sp. (strain ATCC 27184 / PCC 6803 / Kazusa).